The following is a 1058-amino-acid chain: Carbamoyl phosphate synthase large chain (1058 aa).

A carboxyphosphate synthetic domain region spans residues 1 to 401 (MPKRTDIQKI…SLLKACRSLE (401 aa)). Positions 129, 169, 175, 176, 208, 210, 215, 241, 242, 243, 284, and 298 each coordinate ATP. The ATP-grasp 1 domain occupies 133-327 (KQLMEELEQP…IAKLAAKIAV (195 aa)). Residues glutamine 284, glutamate 298, and asparagine 300 each contribute to the Mg(2+) site. Mn(2+) is bound by residues glutamine 284, glutamate 298, and asparagine 300. The oligomerization domain stretch occupies residues 402–546 (IGVHHNEIPE…YSTYGWENES (145 aa)). The carbamoyl phosphate synthetic domain stretch occupies residues 547 to 929 (IRSDKESVLV…ALYKAFEASY (383 aa)). An ATP-grasp 2 domain is found at 671 to 861 (EQALKELDIP…MAQVATKLIL (191 aa)). The ATP site is built by arginine 707, serine 746, isoleucine 748, glutamate 752, glycine 777, valine 778, histidine 779, serine 780, glutamine 820, and glutamate 832. Residues glutamine 820, glutamate 832, and asparagine 834 each coordinate Mg(2+). Glutamine 820, glutamate 832, and asparagine 834 together coordinate Mn(2+). In terms of domain architecture, MGS-like spans 930 to 1058 (LHLPTFGNVV…ESRSFVTEAI (129 aa)). An allosteric domain region spans residues 930–1058 (LHLPTFGNVV…ESRSFVTEAI (129 aa)).

The protein belongs to the CarB family. As to quaternary structure, composed of two chains; the small (or glutamine) chain promotes the hydrolysis of glutamine to ammonia, which is used by the large (or ammonia) chain to synthesize carbamoyl phosphate. Tetramer of heterodimers (alpha,beta)4. Mg(2+) serves as cofactor. Requires Mn(2+) as cofactor.

It carries out the reaction hydrogencarbonate + L-glutamine + 2 ATP + H2O = carbamoyl phosphate + L-glutamate + 2 ADP + phosphate + 2 H(+). The enzyme catalyses hydrogencarbonate + NH4(+) + 2 ATP = carbamoyl phosphate + 2 ADP + phosphate + 2 H(+). The protein operates within amino-acid biosynthesis; L-arginine biosynthesis; carbamoyl phosphate from bicarbonate: step 1/1. Its pathway is pyrimidine metabolism; UMP biosynthesis via de novo pathway; (S)-dihydroorotate from bicarbonate: step 1/3. Large subunit of the glutamine-dependent carbamoyl phosphate synthetase (CPSase). CPSase catalyzes the formation of carbamoyl phosphate from the ammonia moiety of glutamine, carbonate, and phosphate donated by ATP, constituting the first step of 2 biosynthetic pathways, one leading to arginine and/or urea and the other to pyrimidine nucleotides. The large subunit (synthetase) binds the substrates ammonia (free or transferred from glutamine from the small subunit), hydrogencarbonate and ATP and carries out an ATP-coupled ligase reaction, activating hydrogencarbonate by forming carboxy phosphate which reacts with ammonia to form carbamoyl phosphate. In Streptococcus pneumoniae (strain JJA), this protein is Carbamoyl phosphate synthase large chain.